Consider the following 308-residue polypeptide: Cell division protein ZipA (308 aa).

Topologically, residues 1–5 (MQELR) are periplasmic. The helical transmembrane segment at 6–26 (LVLILVGALAIAALLFHGLWT) threads the bilayer. Residues 27-308 (SRKETSSKFG…YKQRVKVFCN (282 aa)) lie on the Cytoplasmic side of the membrane. The interval 43–90 (FDSESEDEQPTPARGFEQPKESVVDVRQERKEPAFGRDEPNLSQDPLF) is disordered. Over residues 59–82 (EQPKESVVDVRQERKEPAFGRDEP) the composition is skewed to basic and acidic residues.

Belongs to the ZipA family. Interacts with FtsZ via their C-terminal domains.

Its subcellular location is the cell inner membrane. In terms of biological role, essential cell division protein that stabilizes the FtsZ protofilaments by cross-linking them and that serves as a cytoplasmic membrane anchor for the Z ring. Also required for the recruitment to the septal ring of downstream cell division proteins. This chain is Cell division protein ZipA, found in Aliivibrio salmonicida (strain LFI1238) (Vibrio salmonicida (strain LFI1238)).